We begin with the raw amino-acid sequence, 428 residues long: Immunoglobulin superfamily member 11 (428 aa).

The signal sequence occupies residues 1–22; it reads MTRRRSAPASWLLVSLLGVATS. In terms of domain architecture, Ig-like V-type spans 23–136; that stretch reads LEVSESPGSV…DRGGRNIGVT (114 aa). Topologically, residues 23–240 are extracellular; sequence LEVSESPGSV…QVISPQPRSV (218 aa). 2 disulfide bridges follow: Cys44–Cys120 and Cys165–Cys215. Asn102 carries an N-linked (GlcNAc...) asparagine glycan. An Ig-like C2-type domain is found at 144–234; the sequence is PSAPQCQIQG…TCLLDLQVIS (91 aa). A helical transmembrane segment spans residues 241–261; the sequence is GVIAGAVGTGAVLIVICLALI. Topologically, residues 262-428 are cytoplasmic; it reads SGAFFYWRSK…PAQSRAGSLV (167 aa). The residue at position 375 (Arg375) is an Omega-N-methylarginine. Residues 376 to 389 show a composition bias toward polar residues; the sequence is GSSPQVLPRNNGSV. The tract at residues 376-396 is disordered; the sequence is GSSPQVLPRNNGSVSRKPWPQ.

Post-translationally, N-glycosylated. In terms of tissue distribution, highly expressed in testis and detected in kidney and adrenal gland. In brain, expressed in commissure fibers of the corpus callosum and pyramidal cell layers of the dentate gyrus and hippocampus where it is probably expressed by both neurons and glial cells.

Its subcellular location is the cell membrane. Functionally, functions as a cell adhesion molecule through homophilic interaction. Stimulates cell growth. This Mus musculus (Mouse) protein is Immunoglobulin superfamily member 11 (Igsf11).